We begin with the raw amino-acid sequence, 433 residues long: ATP-dependent protease ATPase subunit HslU (433 aa).

ATP contacts are provided by residues valine 18, 60-65 (GVGKTE), aspartate 246, glutamate 311, and arginine 383.

It belongs to the ClpX chaperone family. HslU subfamily. In terms of assembly, a double ring-shaped homohexamer of HslV is capped on each side by a ring-shaped HslU homohexamer. The assembly of the HslU/HslV complex is dependent on binding of ATP.

It is found in the cytoplasm. In terms of biological role, ATPase subunit of a proteasome-like degradation complex; this subunit has chaperone activity. The binding of ATP and its subsequent hydrolysis by HslU are essential for unfolding of protein substrates subsequently hydrolyzed by HslV. HslU recognizes the N-terminal part of its protein substrates and unfolds these before they are guided to HslV for hydrolysis. In Rhodopseudomonas palustris (strain TIE-1), this protein is ATP-dependent protease ATPase subunit HslU.